Here is a 2462-residue protein sequence, read N- to C-terminus: Piezo-type mechanosensitive ion channel homolog (2462 aa).

A run of 19 helical transmembrane segments spans residues Leu5–Ile25, Phe27–Phe47, Ile57–Ala77, Thr105–Tyr125, Ala163–Gly183, Leu207–Phe227, Glu248–Val268, Phe325–Ala345, Leu347–Phe367, Gly374–Phe394, Phe404–Leu424, Leu467–Leu487, Ser502–Val522, Ile554–Phe574, Val653–Ile673, Ala694–Leu714, Ala730–Ser750, Phe792–Ile812, and Ser826–Met846. The tract at residues Ala927–Met947 is disordered. Residues Ser928–Ser939 are compositionally biased toward low complexity. The next 8 membrane-spanning stretches (helical) occupy residues Phe1027–Leu1047, Phe1050–Leu1070, Leu1078–Trp1098, Thr1143–Ala1160, Leu1204–Leu1224, Ile1228–Leu1248, Val1260–Phe1280, and Ser1310–Ser1330. Residues Ala1347–Asp1400 are a coiled coil. A disordered region spans residues Ser1543–Gly1583. The segment covering Ser1550–Met1559 has biased composition (acidic residues). The span at Glu1570–Gly1583 shows a compositional bias: polar residues. Transmembrane regions (helical) follow at residues Phe1611 to Phe1631, Val1647 to Ile1667, Tyr1916 to Ile1936, Phe1956 to Cys1976, Val1984 to Ile2004, Ala2012 to Ile2032, Gly2130 to Ser2150, and Phe2369 to Ala2389.

This sequence belongs to the PIEZO (TC 1.A.75) family.

It is found in the membrane. Its function is as follows. Pore-forming subunit of a mechanosensitive non-specific cation channel, that conducts both sodium and potassium ions. The sequence is that of Piezo-type mechanosensitive ion channel homolog from Arabidopsis thaliana (Mouse-ear cress).